Consider the following 20-residue polypeptide: L-amino-acid oxidase L1 (20 aa).

The protein belongs to the flavin monoamine oxidase family. FIG1 subfamily. Monomer. This is in contrast with most of its orthologs, that are non-covalently linked homodimers. FAD is required as a cofactor. In terms of processing, N-glycosylated. Expressed by the venom gland.

It is found in the secreted. It catalyses the reaction an L-alpha-amino acid + O2 + H2O = a 2-oxocarboxylate + H2O2 + NH4(+). It carries out the reaction L-leucine + O2 + H2O = 4-methyl-2-oxopentanoate + H2O2 + NH4(+). The enzyme catalyses L-phenylalanine + O2 + H2O = 3-phenylpyruvate + H2O2 + NH4(+). The catalysed reaction is L-tryptophan + O2 + H2O = indole-3-pyruvate + H2O2 + NH4(+). It catalyses the reaction L-methionine + O2 + H2O = 4-methylsulfanyl-2-oxobutanoate + H2O2 + NH4(+). It carries out the reaction L-isoleucine + O2 + H2O = (S)-3-methyl-2-oxopentanoate + H2O2 + NH4(+). The enzyme catalyses L-tyrosine + O2 + H2O = 3-(4-hydroxyphenyl)pyruvate + H2O2 + NH4(+). Its function is as follows. Catalyzes an oxidative deamination of predominantly hydrophobic and aromatic L-amino acids, thus producing hydrogen peroxide that may contribute to the diverse toxic effects of this enzyme. Is active on L-Met, L-Ile, L-Leu, L-Phe, L-Trp, and L-Tyr. Exhibits diverse biological activities, such as hemorrhage, hemolysis, edema, apoptosis of vascular endothelial cells or tumor cell lines, antibacterial and antiparasitic activities, as well as regulation of platelet aggregation. Its effect on platelets is controversial, since it either induces aggregation or inhibits agonist-induced aggregation. These different effects are probably due to different experimental conditions. This chain is L-amino-acid oxidase L1, found in Daboia russelii (Russel's viper).